A 582-amino-acid chain; its full sequence is Proline--tRNA ligase (582 aa).

Belongs to the class-II aminoacyl-tRNA synthetase family. ProS type 1 subfamily. As to quaternary structure, homodimer.

It localises to the cytoplasm. It carries out the reaction tRNA(Pro) + L-proline + ATP = L-prolyl-tRNA(Pro) + AMP + diphosphate. Its function is as follows. Catalyzes the attachment of proline to tRNA(Pro) in a two-step reaction: proline is first activated by ATP to form Pro-AMP and then transferred to the acceptor end of tRNA(Pro). As ProRS can inadvertently accommodate and process non-cognate amino acids such as alanine and cysteine, to avoid such errors it has two additional distinct editing activities against alanine. One activity is designated as 'pretransfer' editing and involves the tRNA(Pro)-independent hydrolysis of activated Ala-AMP. The other activity is designated 'posttransfer' editing and involves deacylation of mischarged Ala-tRNA(Pro). The misacylated Cys-tRNA(Pro) is not edited by ProRS. This Mycobacterium tuberculosis (strain CDC 1551 / Oshkosh) protein is Proline--tRNA ligase.